A 101-amino-acid chain; its full sequence is Interleukin-8 (101 aa).

A signal peptide spans 1-22 (MTSKLAVALLAAFLLSAALCEG). Arg27 is subject to Citrulline. 2 cysteine pairs are disulfide-bonded: Cys34-Cys61 and Cys36-Cys77.

Belongs to the intercrine alpha (chemokine CxC) family. In terms of assembly, homodimer. Interacts with TNFAIP6 (via Link domain); this interaction interferes with chemokine binding to glycosaminoglycans. Post-translationally, citrullination at Arg-27 prevents proteolysis, and dampens tissue inflammation, it also enhances leukocytosis, possibly through impaired chemokine clearance from the blood circulation.

Its subcellular location is the secreted. Functionally, chemotactic factor that mediates inflammatory response by attracting neutrophils, basophils, and T-cells to clear pathogens and protect the host from infection. Also plays an important role in neutrophil activation. Released in response to an inflammatory stimulus, exerts its effect by binding to the G-protein-coupled receptors CXCR1 and CXCR2, primarily found in neutrophils, monocytes and endothelial cells. G-protein heterotrimer (alpha, beta, gamma subunits) constitutively binds to CXCR1/CXCR2 receptor and activation by IL8 leads to beta and gamma subunits release from Galpha (GNAI2 in neutrophils) and activation of several downstream signaling pathways including PI3K and MAPK pathways. In Macaca mulatta (Rhesus macaque), this protein is Interleukin-8 (CXCL8).